We begin with the raw amino-acid sequence, 85 residues long: uncharacterized protein (85 aa).

2 consecutive transmembrane segments (helical) span residues 14 to 34 and 60 to 80; these read FLFGLLAVFIIAASVVTRATI and IFVYSLVFTVLLAIPLGIYFL.

It is found in the cell membrane. This is an uncharacterized protein from Escherichia coli O157:H7.